A 278-amino-acid chain; its full sequence is MSIIEAIIIGIVQGITEFLPISSTAHIVITQFLFDYTFPGFGFEIFLHIASILAVILYFRKDLLQVIVGFFSYFKDKSEENRIQFMFAIYIIVATGITGVLGLLLEDLVGAQMKTPPFIAGALIITGTFLIIIERFFVYKDRTVKDMTLKDSIIVGLGQTLAVFPGISRSGATLITALFSGLNKETAVRYSFLLSIPVILGTSVLAIGDLLDGTLVEQVGGLPLIISFIVTFFFSWLGIIWLIDFLKRSKLIYFAFYCFALAIFVFFYFDHNMTIDLE.

The next 7 helical transmembrane spans lie at 1 to 21 (MSII…FLPI), 38 to 58 (FPGF…VILY), 85 to 105 (FMFA…GLLL), 118 to 138 (FIAG…RFFV), 191 to 211 (SFLL…GDLL), 223 to 243 (PLII…IWLI), and 251 to 271 (LIYF…YFDH).

The protein belongs to the UppP family.

The protein resides in the cell membrane. The catalysed reaction is di-trans,octa-cis-undecaprenyl diphosphate + H2O = di-trans,octa-cis-undecaprenyl phosphate + phosphate + H(+). Functionally, catalyzes the dephosphorylation of undecaprenyl diphosphate (UPP). Confers resistance to bacitracin. This chain is Undecaprenyl-diphosphatase 2, found in Halalkalibacterium halodurans (strain ATCC BAA-125 / DSM 18197 / FERM 7344 / JCM 9153 / C-125) (Bacillus halodurans).